Reading from the N-terminus, the 353-residue chain is Basic membrane protein C (353 aa).

The N-terminal stretch at 1 to 16 is a signal peptide; it reads MFKRFIFITLSLLVFA. Residue Cys-17 is the site of N-palmitoyl cysteine attachment. Cys-17 carries S-diacylglycerol cysteine lipidation.

The protein belongs to the BMP lipoprotein family. As to quaternary structure, monomer.

It localises to the cell inner membrane. Functionally, may be part of an ABC-type nucleoside uptake system involved in the purine salvage pathway. The sequence is that of Basic membrane protein C (bmpC) from Borreliella burgdorferi (strain ATCC 35210 / DSM 4680 / CIP 102532 / B31) (Borrelia burgdorferi).